The sequence spans 216 residues: Peptide methionine sulfoxide reductase MsrA (216 aa).

Cys-57 is a catalytic residue.

The protein belongs to the MsrA Met sulfoxide reductase family.

It catalyses the reaction L-methionyl-[protein] + [thioredoxin]-disulfide + H2O = L-methionyl-(S)-S-oxide-[protein] + [thioredoxin]-dithiol. The catalysed reaction is [thioredoxin]-disulfide + L-methionine + H2O = L-methionine (S)-S-oxide + [thioredoxin]-dithiol. Functionally, has an important function as a repair enzyme for proteins that have been inactivated by oxidation. Catalyzes the reversible oxidation-reduction of methionine sulfoxide in proteins to methionine. This Agrobacterium fabrum (strain C58 / ATCC 33970) (Agrobacterium tumefaciens (strain C58)) protein is Peptide methionine sulfoxide reductase MsrA.